We begin with the raw amino-acid sequence, 398 residues long: MALKKKEFNKKLKHFTINFGPQHPAAHGVLRLILELNGEVVQRADPHIGLLHRGTEKLIEAKTYFQALPYFDRLDYVSMMCQEHTYALSVENLLQVSIPRRAQFIRVLFAEITRILNHLLAVGCHAMDVGAMTPFLWAFEEREKLMEFYERVSGARMHASYFRPGGVSQDISVGLVDDIFAFVAQFGQRLDEIEEMLTDNRIWQERLVDIGVVSAQEAIDWGFSGVMLRGSGIRWDLRKNEPYEIYSDLNFQGVVGKTGDCYDRYLARVEEMRQSLSIIYQCLNKMPRGSVKIDDAKISPPSRSEVKQSMESLIHHFKLYTEGVFVPAGETYTATEAPKGEFGVYLVSKGSSRPYRCKIKAPGFSHLQGLNFMACSHMLADVVTIIGTQDIVFGEVDR.

It belongs to the complex I 49 kDa subunit family.

Its subcellular location is the mitochondrion. It carries out the reaction a ubiquinone + NADH + 5 H(+)(in) = a ubiquinol + NAD(+) + 4 H(+)(out). In terms of biological role, core subunit of the mitochondrial membrane respiratory chain NADH dehydrogenase (Complex I) that is believed to belong to the minimal assembly required for catalysis. Complex I functions in the transfer of electrons from NADH to the respiratory chain. The immediate electron acceptor for the enzyme is believed to be ubiquinone. Component of the iron-sulfur (IP) fragment of the enzyme. Component of the iron-sulfur (IP) fragment of the enzyme. This Pylaiella littoralis (Seaweed) protein is NADH-ubiquinone oxidoreductase 49 kDa subunit (NAD7).